A 328-amino-acid chain; its full sequence is MSGAESYRHITVLLNEAVDALAVREDGVYVDGTFGRGGHSRLILSRLGDAGRLIVFDKDPQAIAVAEELARSDKRVGVVHGGFASFQAALDGLGIGKVDGALFDLGISSPQIDDGSRGFSFRFDAPLDMRMDTTRGMSAAEWIAVASEQDLHEVIKNYGEERFSRQIARAIVAQRAESPIDTTRKLAQIVAQNVRTRERGQDPATRTFQAVRIFINRELEEVGAVLPQVMCRLKEGGRLAVIAFHSLEDRIVKQFVKKYSQHAPLPRWAAVREADLPELPLKIVGRALKPGEAEIAANPRARSAVLRVAERTAGPIPEQSQRKTSEWQ.

S-adenosyl-L-methionine is bound by residues 37-39, aspartate 57, phenylalanine 83, aspartate 104, and glutamine 111; that span reads GGH.

It belongs to the methyltransferase superfamily. RsmH family.

The protein localises to the cytoplasm. It carries out the reaction cytidine(1402) in 16S rRNA + S-adenosyl-L-methionine = N(4)-methylcytidine(1402) in 16S rRNA + S-adenosyl-L-homocysteine + H(+). Its function is as follows. Specifically methylates the N4 position of cytidine in position 1402 (C1402) of 16S rRNA. The sequence is that of Ribosomal RNA small subunit methyltransferase H from Neisseria meningitidis serogroup C / serotype 2a (strain ATCC 700532 / DSM 15464 / FAM18).